A 635-amino-acid chain; its full sequence is Threonine--tRNA ligase (635 aa).

Residues 1–61 (MIKITLKDGK…HKDSSLEILT (61 aa)) form the TGS domain. The interval 242 to 532 (DHRKLGKELD…LIEQYAGAFP (291 aa)) is catalytic. 3 residues coordinate Zn(2+): cysteine 333, histidine 384, and histidine 509.

It belongs to the class-II aminoacyl-tRNA synthetase family. In terms of assembly, homodimer. It depends on Zn(2+) as a cofactor.

Its subcellular location is the cytoplasm. The catalysed reaction is tRNA(Thr) + L-threonine + ATP = L-threonyl-tRNA(Thr) + AMP + diphosphate + H(+). Catalyzes the attachment of threonine to tRNA(Thr) in a two-step reaction: L-threonine is first activated by ATP to form Thr-AMP and then transferred to the acceptor end of tRNA(Thr). Also edits incorrectly charged L-seryl-tRNA(Thr). This chain is Threonine--tRNA ligase, found in Clostridium botulinum (strain Okra / Type B1).